Here is a 144-residue protein sequence, read N- to C-terminus: Large ribosomal subunit protein uL15 (144 aa).

Positions 1–57 are disordered; that stretch reads MELNNLKPAEGSKHAKRRVGRGIGSGLGKTAGRGHKGQKSRSGGFHKVGFEGGQMPL. The span at 21-31 shows a compositional bias: gly residues; sequence RGIGSGLGKTA.

It belongs to the universal ribosomal protein uL15 family. Part of the 50S ribosomal subunit.

Binds to the 23S rRNA. This chain is Large ribosomal subunit protein uL15, found in Paraburkholderia phytofirmans (strain DSM 17436 / LMG 22146 / PsJN) (Burkholderia phytofirmans).